Here is a 597-residue protein sequence, read N- to C-terminus: MDHIRNFSIIAHIDHGKSTLADRIIQLCGGLSDREMEAQVLDSMDIEKERGITIKAQTAALSYKARDGQVYNLNLIDTPGHVDFSYEVSRSLSACEGALLVVDASQGVEAQTVANCYTAIELGVEVVPVLNKIDLPQADPDNAIQEIEDVIGIDAQDATPCSAKTGQGVQDVIEALIAKVPPPKGDADAPLQALIIDSWFDNYVGVVMLVRVVNGTLRTKDKVLLMATGSQHLVEQVGVFTPKSIQRDALTAGQVGFVIAGIKELKAAKVGDTITTVQRKAEAPLPGFKEVKPQVFAGLYPVEANQYEALRESLEKLRLNDASLMFEPEVSQALGFGFRCGFLGLLHMEIVQERLEREFDMDLITTAPTVVYQVEMRDGTTVTVENPAKMPDPGKIEAILEPIVTVNLYMPQEYVGSVITLCTQKRGTQVNMSYHGKQVQLTYEIPMAEIVMDFFDRLKSVSRGYASMDYEFKEYRPSDVVKVDILINSDKVDALSVIVHRSNSQYRGREVAAKMREIIPRQMYDVAIQAAIGSNIIARENVKALRKNVLAKCYGGDISRKKKLLEKQKAGKKRMKQVGTVEIPQEAFLAILQVDDK.

In terms of domain architecture, tr-type G spans 2–184 (DHIRNFSIIA…ALIAKVPPPK (183 aa)). GTP contacts are provided by residues 14–19 (DHGKST) and 131–134 (NKID).

This sequence belongs to the TRAFAC class translation factor GTPase superfamily. Classic translation factor GTPase family. LepA subfamily.

The protein resides in the cell inner membrane. It carries out the reaction GTP + H2O = GDP + phosphate + H(+). Its function is as follows. Required for accurate and efficient protein synthesis under certain stress conditions. May act as a fidelity factor of the translation reaction, by catalyzing a one-codon backward translocation of tRNAs on improperly translocated ribosomes. Back-translocation proceeds from a post-translocation (POST) complex to a pre-translocation (PRE) complex, thus giving elongation factor G a second chance to translocate the tRNAs correctly. Binds to ribosomes in a GTP-dependent manner. This chain is Elongation factor 4, found in Cupriavidus taiwanensis (strain DSM 17343 / BCRC 17206 / CCUG 44338 / CIP 107171 / LMG 19424 / R1) (Ralstonia taiwanensis (strain LMG 19424)).